The chain runs to 651 residues: Cysteine-rich receptor-like protein kinase 42 (651 aa).

The N-terminal stretch at methionine 1–serine 28 is a signal peptide. Topologically, residues serine 29–lysine 251 are extracellular. Gnk2-homologous domains lie at threonine 35–phenylalanine 135 and aspartate 137–phenylalanine 236. Asparagine 79 and asparagine 151 each carry an N-linked (GlcNAc...) asparagine glycan. The helical transmembrane segment at glycine 252–threonine 272 threads the bilayer. The Cytoplasmic portion of the chain corresponds to tyrosine 273–isoleucine 651. Residues phenylalanine 315–leucine 604 form the Protein kinase domain. ATP-binding positions include leucine 321 to valine 329 and lysine 343. A Phosphotyrosine modification is found at tyrosine 388. Aspartate 440 acts as the Proton acceptor in catalysis. A phosphoserine mark is found at serine 444 and serine 473. Phosphothreonine occurs at positions 474 and 479. Residue tyrosine 487 is modified to Phosphotyrosine.

The protein belongs to the protein kinase superfamily. Ser/Thr protein kinase family. CRK subfamily.

It localises to the membrane. The enzyme catalyses L-seryl-[protein] + ATP = O-phospho-L-seryl-[protein] + ADP + H(+). It carries out the reaction L-threonyl-[protein] + ATP = O-phospho-L-threonyl-[protein] + ADP + H(+). In Arabidopsis thaliana (Mouse-ear cress), this protein is Cysteine-rich receptor-like protein kinase 42 (CRK42).